Reading from the N-terminus, the 553-residue chain is Undecaprenyl phosphate-alpha-4-amino-4-deoxy-L-arabinose arabinosyl transferase (553 aa).

11 helical membrane passes run 6–26 (ACKV…LLPL), 89–109 (FGSV…AMMM), 115–135 (IAFA…IGTY), 180–200 (FMTK…PIVI), 208–228 (IVCF…PWVI), 258–278 (IAPF…WLGL), 293–313 (NPEM…FSIA), 317–337 (LPTY…KFGV), 352–372 (GMVN…MEVV), 386–406 (WVLA…CFAL), and 410–430 (YWLL…HALP).

It belongs to the glycosyltransferase 83 family.

The protein localises to the cell inner membrane. The enzyme catalyses 4-amino-4-deoxy-alpha-L-arabinopyranosyl di-trans,octa-cis-undecaprenyl phosphate + lipid IVA = lipid IIA + di-trans,octa-cis-undecaprenyl phosphate.. It participates in lipopolysaccharide metabolism; 4-amino-4-deoxy-beta-L-arabinose-lipid A biosynthesis. In terms of biological role, catalyzes the transfer of the L-Ara4N moiety of the glycolipid undecaprenyl phosphate-alpha-L-Ara4N to lipid A. The modified arabinose is attached to lipid A and is required for resistance to polymyxin and cationic antimicrobial peptides. This Photorhabdus laumondii subsp. laumondii (strain DSM 15139 / CIP 105565 / TT01) (Photorhabdus luminescens subsp. laumondii) protein is Undecaprenyl phosphate-alpha-4-amino-4-deoxy-L-arabinose arabinosyl transferase (arnT).